The primary structure comprises 370 residues: Germination protease (370 aa).

Positions Met1–Asp15 are excised as a propeptide.

The protein belongs to the peptidase A25 family. Homotetramer. Post-translationally, autoproteolytically processed. The inactive tetrameric zymogen termed p46 autoprocesses to a smaller form termed p41, which is active only during spore germination.

The catalysed reaction is Endopeptidase action with P4 Glu or Asp, P1 preferably Glu &gt; Asp, P1' hydrophobic and P2' Ala.. In terms of biological role, initiates the rapid degradation of small, acid-soluble proteins during spore germination. The sequence is that of Germination protease (gpr) from Priestia megaterium (strain ATCC 12872 / QMB1551) (Bacillus megaterium).